A 430-amino-acid polypeptide reads, in one-letter code: T-kininogen 2 (430 aa).

The signal sequence occupies residues 1-18 (MKLITILLLCSRLLPSLA). Glutamine 19 carries the pyrrolidone carboxylic acid modification. Residues 28 to 131 (CNDETVFQAV…TQICNITPGK (104 aa)) enclose the Cystatin kininogen-type 1 domain. Cystine bridges form between cysteine 28-cysteine 404, cysteine 83-cysteine 94, cysteine 107-cysteine 125, cysteine 141-cysteine 144, cysteine 205-cysteine 217, cysteine 228-cysteine 247, cysteine 263-cysteine 266, cysteine 327-cysteine 339, and cysteine 350-cysteine 369. The N-linked (GlcNAc...) asparagine glycan is linked to asparagine 82. The 104-residue stretch at 150 to 253 (MDSSDLKPVL…SQSCDLYPGD (104 aa)) folds into the Cystatin kininogen-type 2 domain. N-linked (GlcNAc...) asparagine glycans are attached at residues asparagine 168 and asparagine 204. One can recognise a Cystatin kininogen-type 3 domain in the interval 272–375 (VDSPELKEAL…TVRCQALDMM (104 aa)). N-linked (GlcNAc...) asparagine glycosylation is present at asparagine 326. Residues 410-430 (LSKAGAGPAPDHQAEASTVTP) form a disordered region.

In terms of processing, as T-kinin is preceded by a Met instead of an Arg or Lys, it is not released from its precursor by either tissue or plasma kallikrein. In terms of tissue distribution, plasma.

It localises to the secreted. The protein localises to the extracellular space. Kininogens are plasma glycoproteins with a number of functions: (1) as precursor of the active peptide bradykinin they effect smooth muscle contraction, induction of hypotension and increase of vascular permeability. (2) They play a role in blood coagulation by helping to position optimally prekallikrein and factor XI next to factor XII. (3) They are inhibitor of thiol proteases. This chain is T-kininogen 2, found in Rattus norvegicus (Rat).